A 781-amino-acid polypeptide reads, in one-letter code: uncharacterized protein (781 aa).

The disordered stretch occupies residues 1–34 (MNIAEEPSDEVISSGPEDTDICSQQTSASAEAGD). Residue serine 29 is modified to Phosphoserine. RRM domains are found at residues 195–273 (GNIF…YHVE) and 295–418 (RCLF…KAVQ). Positions 345–375 (SNTRSSSSVSFNEEGSVESNKSSNNTNGNAQ) are disordered. Positions 347–364 (TRSSSSVSFNEEGSVESN) are enriched in low complexity. Over residues 365–374 (KSSNNTNGNA) the composition is skewed to polar residues. A phosphoserine mark is found at serine 433, serine 435, serine 482, and serine 485. At threonine 486 the chain carries Phosphothreonine. Serine 501 is subject to Phosphoserine. Residues 540–638 (SNLYVKHIPL…QVLSVSFAQK (99 aa)) form the RRM 3 domain. The disordered stretch occupies residues 640–668 (GNLSSSDDDDQSQTDNSSKFQNFQPHNDY).

As to quaternary structure, interacts with RBG1.

This is an uncharacterized protein from Saccharomyces cerevisiae (strain ATCC 204508 / S288c) (Baker's yeast).